The following is a 192-amino-acid chain: Ras-like protein RAS2 (192 aa).

15-22 provides a ligand contact to GTP; the sequence is GGGGVGKS. The short motif at 37 to 45 is the Effector region element; that stretch reads YDPTIEDSY. GTP is bound by residues 62 to 66 and 121 to 124; these read DTAGQ and NKSD. The residue at position 189 (C189) is a Cysteine methyl ester. A lipid anchor (S-geranylgeranyl cysteine) is attached at C189. Residues 190-192 constitute a propeptide, removed in mature form; that stretch reads IVL.

This sequence belongs to the small GTPase superfamily. Ras family.

It localises to the cell membrane. The catalysed reaction is GTP + H2O = GDP + phosphate + H(+). Its activity is regulated as follows. Alternates between an inactive form bound to GDP and an active form bound to GTP. Activated by a guanine nucleotide-exchange factor (GEF) and inactivated by a GTPase-activating protein (GAP). Functionally, ras proteins bind GDP/GTP and possess intrinsic GTPase activity. The chain is Ras-like protein RAS2 (RAS2) from Hydra vulgaris (Hydra).